Reading from the N-terminus, the 247-residue chain is Cytochrome c oxidase subunit 2 (247 aa).

Topologically, residues 1–38 are mitochondrial intermembrane; the sequence is MKEMMMSNMFNDVPTPWAMFFQDSATPNMEGMLELHNN. Residues 39 to 58 form a helical membrane-spanning segment; that stretch reads VVFYLCMMLGFVTFMLYNML. Topologically, residues 59–78 are mitochondrial matrix; it reads TTYNKSVMPYKYLNQGQFME. Residues 79–103 form a helical membrane-spanning segment; it reads MMWTTLPAVMLLMIAFPSFILLYMC. Over 104-247 the chain is Mitochondrial intermembrane; the sequence is DEVMAPAMTI…ADFLAWIDEQ (144 aa). The Cu cation site is built by histidine 182, cysteine 217, glutamate 219, cysteine 221, histidine 225, and methionine 228. Glutamate 219 is a Mg(2+) binding site.

This sequence belongs to the cytochrome c oxidase subunit 2 family. In terms of assembly, component of the cytochrome c oxidase (complex IV, CIV), a multisubunit enzyme composed of a catalytic core of 3 subunits and several supernumerary subunits. The complex exists as a monomer or a dimer and forms supercomplexes (SCs) in the inner mitochondrial membrane with ubiquinol-cytochrome c oxidoreductase (cytochrome b-c1 complex, complex III, CIII). Requires Cu cation as cofactor.

Its subcellular location is the mitochondrion inner membrane. It catalyses the reaction 4 Fe(II)-[cytochrome c] + O2 + 8 H(+)(in) = 4 Fe(III)-[cytochrome c] + 2 H2O + 4 H(+)(out). Component of the cytochrome c oxidase, the last enzyme in the mitochondrial electron transport chain which drives oxidative phosphorylation. The respiratory chain contains 3 multisubunit complexes succinate dehydrogenase (complex II, CII), ubiquinol-cytochrome c oxidoreductase (cytochrome b-c1 complex, complex III, CIII) and cytochrome c oxidase (complex IV, CIV), that cooperate to transfer electrons derived from NADH and succinate to molecular oxygen, creating an electrochemical gradient over the inner membrane that drives transmembrane transport and the ATP synthase. Cytochrome c oxidase is the component of the respiratory chain that catalyzes the reduction of oxygen to water. Electrons originating from reduced cytochrome c in the intermembrane space (IMS) are transferred via the dinuclear copper A center (CU(A)) of subunit 2 and heme A of subunit 1 to the active site in subunit 1, a binuclear center (BNC) formed by heme A3 and copper B (CU(B)). The BNC reduces molecular oxygen to 2 water molecules using 4 electrons from cytochrome c in the IMS and 4 protons from the mitochondrial matrix. The protein is Cytochrome c oxidase subunit 2 (COX2) of Brettanomyces custersianus (Yeast).